Reading from the N-terminus, the 77-residue chain is Small nuclear ribonucleoprotein G (77 aa).

Residues V2 to I77 enclose the Sm domain.

The protein belongs to the snRNP Sm proteins family. Component of the Sm core complex, present in spliceosomal snRNP U1, U2, U4/U6 and U5. The core complex contains SMB1, SMD1, SMD2, SMD3, SME1, SMX3 and SMX2 (Sm proteins B, D1, D2, D3, E, F and G, respectively), and is probably a heptameric ring structure. SMX2 specifically interacts with SME1. Belongs to the CWC complex (or CEF1-associated complex), a spliceosome sub-complex reminiscent of a late-stage spliceosome composed of the U2, U5 and U6 snRNAs and at least BUD13, BUD31, BRR2, CDC40, CEF1, CLF1, CUS1, CWC2, CWC15, CWC21, CWC22, CWC23, CWC24, CWC25, CWC27, ECM2, HSH155, IST3, ISY1, LEA1, MSL1, NTC20, PRP8, PRP9, PRP11, PRP19, PRP21, PRP22, PRP45, PRP46, SLU7, SMB1, SMD1, SMD2, SMD3, SMX2, SMX3, SNT309, SNU114, SPP2, SYF1, SYF2, RSE1 and YJU2. Component of the U4/U6-U5 tri-snRNP complex composed of the U4, U6 and U5 snRNAs and at least PRP3, PRP4, PRP6, PRP8, PRP18, PRP31, PRP38, SNU13, SNU23, SNU66, SNU114, SPP381, SMB1, SMD1, SMD2, SMD3, SMX2, SMX3, LSM2, LSM3, LSM4, LSM5, LSM6, LSM7, LSM8, BRR2 and DIB1.

The protein localises to the nucleus. It localises to the cytoplasm. Its function is as follows. Plays a role in pre-mRNA splicing as a core component of the spliceosomal U1, U2, U4 and U5 small nuclear ribonucleoproteins (snRNPs), the building blocks of the spliceosome. The polypeptide is Small nuclear ribonucleoprotein G (SMX2) (Saccharomyces cerevisiae (strain ATCC 204508 / S288c) (Baker's yeast)).